A 119-amino-acid polypeptide reads, in one-letter code: NADH-quinone oxidoreductase subunit A (119 aa).

The next 3 helical transmembrane spans lie at 7–27 (FPVL…MFLG), 63–83 (LIAI…PWGV), and 88–108 (IGWL…VGFV).

It belongs to the complex I subunit 3 family. As to quaternary structure, NDH-1 is composed of 14 different subunits. Subunits NuoA, H, J, K, L, M, N constitute the membrane sector of the complex.

It localises to the cell inner membrane. The catalysed reaction is a quinone + NADH + 5 H(+)(in) = a quinol + NAD(+) + 4 H(+)(out). NDH-1 shuttles electrons from NADH, via FMN and iron-sulfur (Fe-S) centers, to quinones in the respiratory chain. The immediate electron acceptor for the enzyme in this species is believed to be ubiquinone. Couples the redox reaction to proton translocation (for every two electrons transferred, four hydrogen ions are translocated across the cytoplasmic membrane), and thus conserves the redox energy in a proton gradient. The sequence is that of NADH-quinone oxidoreductase subunit A from Polynucleobacter necessarius subsp. necessarius (strain STIR1).